The following is a 206-amino-acid chain: Protein GrpE (206 aa).

The disordered stretch occupies residues 1–64; sequence MSKKASMHKE…KALEEAQQQA (64 aa). Positions 46–58 are enriched in basic and acidic residues; that stretch reads SDAKVQELEKALE.

It belongs to the GrpE family. In terms of assembly, homodimer.

The protein localises to the cytoplasm. Functionally, participates actively in the response to hyperosmotic and heat shock by preventing the aggregation of stress-denatured proteins, in association with DnaK and GrpE. It is the nucleotide exchange factor for DnaK and may function as a thermosensor. Unfolded proteins bind initially to DnaJ; upon interaction with the DnaJ-bound protein, DnaK hydrolyzes its bound ATP, resulting in the formation of a stable complex. GrpE releases ADP from DnaK; ATP binding to DnaK triggers the release of the substrate protein, thus completing the reaction cycle. Several rounds of ATP-dependent interactions between DnaJ, DnaK and GrpE are required for fully efficient folding. The sequence is that of Protein GrpE from Prosthecochloris aestuarii (strain DSM 271 / SK 413).